The chain runs to 606 residues: Putative amino acid transporter AAT1 (606 aa).

Residues 1 to 156 form a disordered region; sequence MNKKYGTSSN…DEEGTNKPKR (156 aa). 2 stretches are compositionally biased toward basic and acidic residues: residues 12 to 25 and 72 to 89; these read HDNK…ADKN and SDKK…ESSK. The segment covering 140 to 149 has biased composition (acidic residues); the sequence is SDGDYTNDEE. A run of 11 helical transmembrane segments spans residues 175-194, 200-225, 246-271, 283-301, 313-332, 352-372, 393-412, 428-449, 522-539, 545-567, and 579-605; these read TVLF…PYVF, ILSI…TSSL, TIID…SNFL, LFTN…ILPI, FLIF…GLQT, HFFK…NACF, VILQ…FSFL, VSIL…PLNF, MWIS…ACKV, VIGI…LIYY, and RYST…LNLI.

Belongs to the amino acid/polyamine transporter 2 family.

Its subcellular location is the vacuole membrane. Functionally, putative amino acid transporter. Probably transports tryptophan. Involved in maintaining the osmotic homeostasis of the digestive vacuole. Important for the timely development and growth of the asexual-stage parasites and male gametocyte maturation. This Plasmodium falciparum (isolate 3D7) protein is Putative amino acid transporter AAT1.